Consider the following 428-residue polypeptide: Serine--tRNA ligase (428 aa).

231 to 233 (TSE) lines the L-serine pocket. ATP contacts are provided by residues 262-264 (RRE) and Val278. L-serine is bound at residue Glu285. 349–352 (ELTS) contributes to the ATP binding site. Thr384 lines the L-serine pocket.

Belongs to the class-II aminoacyl-tRNA synthetase family. Type-1 seryl-tRNA synthetase subfamily. In terms of assembly, homodimer. The tRNA molecule binds across the dimer.

It is found in the cytoplasm. The catalysed reaction is tRNA(Ser) + L-serine + ATP = L-seryl-tRNA(Ser) + AMP + diphosphate + H(+). The enzyme catalyses tRNA(Sec) + L-serine + ATP = L-seryl-tRNA(Sec) + AMP + diphosphate + H(+). It functions in the pathway aminoacyl-tRNA biosynthesis; selenocysteinyl-tRNA(Sec) biosynthesis; L-seryl-tRNA(Sec) from L-serine and tRNA(Sec): step 1/1. Catalyzes the attachment of serine to tRNA(Ser). Is also able to aminoacylate tRNA(Sec) with serine, to form the misacylated tRNA L-seryl-tRNA(Sec), which will be further converted into selenocysteinyl-tRNA(Sec). The protein is Serine--tRNA ligase of Bifidobacterium longum (strain NCC 2705).